The primary structure comprises 600 residues: Pyranose dehydrogenase 2 (600 aa).

The N-terminal stretch at 1-25 (MLSRVAKLNSRLVSLALLGSQIAFG) is a signal peptide. N-linked (GlcNAc...) asparagine glycosylation is found at N99 and N114. Tele-8alpha-FAD histidine is present on H127. N-linked (GlcNAc...) asparagine glycosylation is found at N199, N275, and N342. The active-site Proton acceptor is H535. The active site involves H579.

It belongs to the GMC oxidoreductase family. As to quaternary structure, monomer. FAD is required as a cofactor. N-glycosylated.

The protein localises to the secreted. The catalysed reaction is pyranose + acceptor = pyranos-2-ulose + reduced acceptor.. It carries out the reaction pyranose + acceptor = pyranos-3-ulose + reduced acceptor.. It catalyses the reaction pyranose + acceptor = pyranos-2,3-diulose + reduced acceptor.. The enzyme catalyses a pyranoside + acceptor = a pyranosid-3-ulose + reduced acceptor.. The catalysed reaction is a pyranoside + acceptor = a pyranosid-3,4-diulose + reduced acceptor.. Functionally, catalyzes the single-oxidation or sequential double oxidation reaction of carbohydrates primarily at carbon-2 and/or carbon-3 with the concomitant reduction of the flavin. The enzyme exhibits a broad sugar substrate specificity, oxidizing different aldopyranoses to the corresponding C-1, C-2, C-3 or C-1,2, C-2,3 and C-3,4 (di)dehydro sugars with substrate-specific regioselectivity. Accepts only a narrow range of electron acceptors such as substituted benzoquinones and complexed metal ions and reacts extremely slowly with O(2) as acceptor. May play a role in the natural recycling of plant matter by oxidizing all major monosaccharides in lignocellulose and by reducing quinone compounds or reactive radical species generated during lignin depolymerization. This Leucoagaricus meleagris (Western flat-topped agaric) protein is Pyranose dehydrogenase 2.